The sequence spans 794 residues: MRVSLSSLQRFFSSPLSIKQIIEACDHIGIETEIETLLSSSFSSIITAKIIQTLPHPNADKLVVATLFDGKQEHQVVCGAPNCRPDIIVPLALPGAKLHDHEGNPYTIKKSKLRGIESQGMCCGADELGFSHLQKTERGLFEFPANTPLGESACALLADTWIEFSLTPNLGHCASLLGLAREIAHVTHVDLILPQEFSFSPLEIITKDSPSHDTSICPFFCCVKISGVCAETSPQELQQALSQFKQKSINTIVDITNYIMLAMGQPLHVYDAKTVDIDSLHAEKAQEQHGLKLLNNEEVLIPQGTAIICDKNHTVGLAGVMGSGDSSFNETTTDIILEAAYFLPKAIRASQMRIPLHSEAAYRFTRGTDPDHVLPSLYAAIHYIQKLFPKAKVAPIHVLGSIPPSPTLTLRTEMVERVLGVPLSHSQVHEELASLGFTVTPQDQGSLSVQVPAYRHDIREEIDLVEEMCRTQPWKIEKKKAPATYSPLYAFKREIVDFLAQSGLQQFFTCDLLDMETAALHRQETDYIALQGSKHATVLRDSLLPGLLKSTATNLNRQAPYVHAFELGTIYTKKNAQYQETQSLGIILSGEAEELSWVFHERVLSFYSIKGWLERLFRHFYISSKTYTIRPSEHPSFHPYQQADLYLHKHLLGRFGTLHPQLCKKAHIKHPVFFAELSVDSLLHTQKKAIARYQPYPIYPSSFRDITLTVDESVPADALRKKLLSFPSKWLENVSIISIYQNKNPTAQNKNVSLRLVFQNKERTLSNQEIEEEHERLLAMLNEQLDDTKGTIDS.

The region spanning 39–154 (SSSFSSIITA…ANTPLGESAC (116 aa)) is the tRNA-binding domain. Residues 403-481 (PPSPTLTLRT…QPWKIEKKKA (79 aa)) enclose the B5 domain. Residues D457, D463, E466, and E467 each coordinate Mg(2+). The FDX-ACB domain maps to 697-793 (PIYPSSFRDI…QLDDTKGTID (97 aa)).

The protein belongs to the phenylalanyl-tRNA synthetase beta subunit family. Type 1 subfamily. Tetramer of two alpha and two beta subunits. Requires Mg(2+) as cofactor.

It is found in the cytoplasm. It carries out the reaction tRNA(Phe) + L-phenylalanine + ATP = L-phenylalanyl-tRNA(Phe) + AMP + diphosphate + H(+). The polypeptide is Phenylalanine--tRNA ligase beta subunit (Chlamydia abortus (strain DSM 27085 / S26/3) (Chlamydophila abortus)).